The chain runs to 265 residues: Putative 2-amino-3,7-dideoxy-D-threo-hept-6-ulosonate synthase 2 (265 aa).

The active-site Proton acceptor is the Asp-27. 1-deoxy-D-threo-hexo-2,5-diulose 6-phosphate contacts are provided by residues 27–31 and 147–149; these read DHGVS and YPR. Residue Tyr-147 is the Proton donor of the active site. The Schiff-base intermediate with substrate role is filled by Lys-177. 1-deoxy-D-threo-hexo-2,5-diulose 6-phosphate is bound by residues 202–203 and 230–231; these read GG and GR.

The protein belongs to the DeoC/FbaB aldolase family. ADHS subfamily. As to quaternary structure, homodecamer.

The enzyme catalyses 1-deoxy-D-threo-hexo-2,5-diulose 6-phosphate + L-aspartate 4-semialdehyde = 2,3-dioxopropyl phosphate + 2-amino-2,3,7-trideoxy-D-lyxo-hept-6-ulosonate. In terms of biological role, catalyzes a transaldol reaction between 6-deoxy-5-ketofructose 1-phosphate (DKFP) and L-aspartate semialdehyde (ASA) with an elimination of hydroxypyruvaldehyde phosphate to yield 2-amino-3,7-dideoxy-D-threo-hept-6-ulosonate (ADH). Plays a key role in an alternative pathway of the biosynthesis of 3-dehydroquinate (DHQ), which is involved in the canonical pathway for the biosynthesis of aromatic amino acids. The protein is Putative 2-amino-3,7-dideoxy-D-threo-hept-6-ulosonate synthase 2 of Archaeoglobus fulgidus (strain ATCC 49558 / DSM 4304 / JCM 9628 / NBRC 100126 / VC-16).